Reading from the N-terminus, the 91-residue chain is Probable Fe(2+)-trafficking protein (91 aa).

It belongs to the Fe(2+)-trafficking protein family.

Could be a mediator in iron transactions between iron acquisition and iron-requiring processes, such as synthesis and/or repair of Fe-S clusters in biosynthetic enzymes. This chain is Probable Fe(2+)-trafficking protein, found in Cupriavidus metallidurans (strain ATCC 43123 / DSM 2839 / NBRC 102507 / CH34) (Ralstonia metallidurans).